Here is a 701-residue protein sequence, read N- to C-terminus: Polyribonucleotide nucleotidyltransferase (701 aa).

Residues D490 and D496 each coordinate Mg(2+). In terms of domain architecture, KH spans 557-616 (PKVETMTIKPEKIRDVIGPGGKKINEIIDETGVKLDIEQDGTIFIGAVDQDMINRAREII). The region spanning 626–694 (GQVYNAKVRR…DKGRVNASHR (69 aa)) is the S1 motif domain.

The protein belongs to the polyribonucleotide nucleotidyltransferase family. Mg(2+) is required as a cofactor.

The protein localises to the cytoplasm. It carries out the reaction RNA(n+1) + phosphate = RNA(n) + a ribonucleoside 5'-diphosphate. Its function is as follows. Involved in mRNA degradation. Catalyzes the phosphorolysis of single-stranded polyribonucleotides processively in the 3'- to 5'-direction. In Staphylococcus carnosus (strain TM300), this protein is Polyribonucleotide nucleotidyltransferase.